A 107-amino-acid chain; its full sequence is UPF0145 protein ECA2666 (107 aa).

This sequence belongs to the UPF0145 family.

This chain is UPF0145 protein ECA2666, found in Pectobacterium atrosepticum (strain SCRI 1043 / ATCC BAA-672) (Erwinia carotovora subsp. atroseptica).